The following is a 46-amino-acid chain: Light-harvesting protein B800/850/890 alpha-1 chain (46 aa).

The Cytoplasmic portion of the chain corresponds to 1-12; it reads MWRLWKLYDPRR. The helical transmembrane segment at 13–33 threads the bilayer; that stretch reads VLIGIFSWLAVLALVIHFILL. His-29 contributes to the a bacteriochlorophyll binding site. Over 34 to 46 the chain is Periplasmic; it reads STDRFNWVGGAAN.

Belongs to the antenna complex alpha subunit family. In terms of assembly, the core complex is formed by different alpha and beta chains, binding bacteriochlorophyll molecules, and arranged most probably in tetrameric structures disposed around the reaction center. The non-pigmented gamma chains may constitute additional components.

It is found in the cell inner membrane. Functionally, antenna complexes are light-harvesting systems, which transfer the excitation energy to the reaction centers. In Halorhodospira halophila (strain DSM 244 / SL1) (Ectothiorhodospira halophila (strain DSM 244 / SL1)), this protein is Light-harvesting protein B800/850/890 alpha-1 chain.